A 201-amino-acid chain; its full sequence is Probable chemoreceptor glutamine deamidase CheD 2 (201 aa).

The protein belongs to the CheD family.

It carries out the reaction L-glutaminyl-[protein] + H2O = L-glutamyl-[protein] + NH4(+). Functionally, probably deamidates glutamine residues to glutamate on methyl-accepting chemotaxis receptors (MCPs), playing an important role in chemotaxis. This Chromobacterium violaceum (strain ATCC 12472 / DSM 30191 / JCM 1249 / CCUG 213 / NBRC 12614 / NCIMB 9131 / NCTC 9757 / MK) protein is Probable chemoreceptor glutamine deamidase CheD 2.